Consider the following 398-residue polypeptide: 2,3-bisphosphoglycerate-independent phosphoglycerate mutase (398 aa).

The protein belongs to the BPG-independent phosphoglycerate mutase family. A-PGAM subfamily.

The enzyme catalyses (2R)-2-phosphoglycerate = (2R)-3-phosphoglycerate. It functions in the pathway carbohydrate degradation; glycolysis; pyruvate from D-glyceraldehyde 3-phosphate: step 3/5. In terms of biological role, catalyzes the interconversion of 2-phosphoglycerate and 3-phosphoglycerate. The sequence is that of 2,3-bisphosphoglycerate-independent phosphoglycerate mutase from Methanosarcina barkeri (strain Fusaro / DSM 804).